The chain runs to 533 residues: Probable protein kinase UbiB (533 aa).

The helical transmembrane segment at 24–44 (LILELPMLPWWLRLLGAALPW) threads the bilayer. One can recognise a Protein kinase domain in the interval 126 to 494 (RFEREPLASA…WKSSRHDWLG (369 aa)). ATP-binding positions include 132–140 (LASASVAQV) and K154. The Proton acceptor role is filled by D289. A helical transmembrane segment spans residues 510–530 (LGQQLEAWPAWVMLAGGVFLI).

It belongs to the ABC1 family. UbiB subfamily.

The protein localises to the cell inner membrane. It functions in the pathway cofactor biosynthesis; ubiquinone biosynthesis [regulation]. In terms of biological role, is probably a protein kinase regulator of UbiI activity which is involved in aerobic coenzyme Q (ubiquinone) biosynthesis. The chain is Probable protein kinase UbiB from Pseudomonas paraeruginosa (strain DSM 24068 / PA7) (Pseudomonas aeruginosa (strain PA7)).